The following is an 830-amino-acid chain: Periplasmic nitrate reductase (830 aa).

Residues 1 to 30 (MTTRREFIKRSAAVTAACTAGISLSGEASN) constitute a signal peptide (tat-type signal). The 4Fe-4S Mo/W bis-MGD-type domain maps to 40 to 96 (LKWSKAPCRFCGTGCSVNVAVKDNQVVATHGDIQSEVNRGLNCVKGYFLSKIMYGKD). The [4Fe-4S] cluster site is built by Cys47, Cys50, Cys54, and Cys82. Mo-bis(molybdopterin guanine dinucleotide) is bound by residues Lys84, Gln151, Asn176, Cys180, 213–220 (WGSNMAEM), 244–248 (STFQH), Met374, Gln378, Asn484, 510–511 (SE), Lys533, Asp560, and 720–729 (TGRVLEHWHS). Residue Trp796 coordinates substrate. Residues Asn804 and Lys821 each contribute to the Mo-bis(molybdopterin guanine dinucleotide) site.

This sequence belongs to the prokaryotic molybdopterin-containing oxidoreductase family. NasA/NapA/NarB subfamily. In terms of assembly, component of the periplasmic nitrate reductase NapAB complex composed of NapA and NapB. [4Fe-4S] cluster is required as a cofactor. Requires Mo-bis(molybdopterin guanine dinucleotide) as cofactor. Predicted to be exported by the Tat system. The position of the signal peptide cleavage has not been experimentally proven.

The protein resides in the periplasm. The enzyme catalyses 2 Fe(II)-[cytochrome] + nitrate + 2 H(+) = 2 Fe(III)-[cytochrome] + nitrite + H2O. Catalytic subunit of the periplasmic nitrate reductase complex NapAB. Receives electrons from NapB and catalyzes the reduction of nitrate to nitrite. This is Periplasmic nitrate reductase from Hahella chejuensis (strain KCTC 2396).